We begin with the raw amino-acid sequence, 701 residues long: Polyribonucleotide nucleotidyltransferase (701 aa).

Asp487 and Asp493 together coordinate Mg(2+). One can recognise a KH domain in the interval 554–613 (PTMLAMKIDQDKIRDVIGKGGATIRAICEETKASIDIEDDGSIKIFGETKEAAEAAKQRV). Residues 623–691 (GKIYVGKVER…NRGRIKLSIK (69 aa)) form the S1 motif domain.

Belongs to the polyribonucleotide nucleotidyltransferase family. In terms of assembly, component of the RNA degradosome, which is a multiprotein complex involved in RNA processing and mRNA degradation. Mg(2+) is required as a cofactor.

It is found in the cytoplasm. It catalyses the reaction RNA(n+1) + phosphate = RNA(n) + a ribonucleoside 5'-diphosphate. Functionally, involved in mRNA degradation. Catalyzes the phosphorolysis of single-stranded polyribonucleotides processively in the 3'- to 5'-direction. The polypeptide is Polyribonucleotide nucleotidyltransferase (Stutzerimonas stutzeri (strain A1501) (Pseudomonas stutzeri)).